Here is a 1130-residue protein sequence, read N- to C-terminus: MRTRVLRCRPFSTRILLLLLFVLAFGVYCYFYNASPQNYNKPRISYPASMEHFKSSLTHTVKSRDEPTPDQCPALKESEADIDTVAIYPTFDFQPSWLRTKEFWDKSFEDRYERIHNDTTRPRLKVIVVPHSHNDPGWLKTFEQYFEWKTKNIINNIVNKLHQYPNMTFIWTEISFLNAWWERSHPVKQKALKKLIKEGRLEITTGGWVMPDEACTHIYALIDQFIEGHHWVKTNLGVIPKTGWSIDPFGHGATVPYLLDQSGLEGTIIQRIHYAWKQWLAERQIEEFYWLASWATTKPSMIVHNQPFDIYSIKSTCGPHPSICLSFDFRKIPGEYSEYTAKHEDITEHNLHSKAKTLIEEYDRIGSLTPHNVVLVPLGDDFRYEYSVEFDAQYVNYMKMFNYINAHKEIFNADVQFGTPLDYFNAMKERHQNIPSLKGDFFVYSDIFSEGKPAYWSGYYTTRPYQKILARQFEHQLRSAEILFTLVSNYIRQMGRQGEFGASEKKLEKSYEQLIYARRNLGLFQHHDAITGTSKSSVMQDYGTKLFTSLYHCIRLQEAALTTIMLPDQSLHSQSIIQSEVEWETYGKPPKKLQVSFIDKKKVILFNPLAETRTEVVTVRSNTSNIRVYDTHKRKHVLYQIMPSITIQDNGKSIVSDTTFDIMFVATIPPLTSISYKLQEHTNTSHHCVIFCNNCEQYQKSNVFQIKKMMPGDIQLENAVLKLLVNRNTGFLRQVYRKDIRKRTVVDVQFGAYQSAQRHSGAYLFMPHYDSPEKNVLHPYTNQNNMQDDNIIIVSGPISTEITTMYLPFLVHTIRIYNVPDPVLSRAILLETDVDFEAPPKNRETELFMRLQTDIQNGDIPEFYTDQNGFQYQKRVKVNKLGIEANYYPITTMACLQDEETRLTLLTNHAQGAAAYEPGRLEVMLDRRTLYDDFRGIGEGVVDNKPTTFQNWILIESMPGVTRAKRDTSEPGFKFVNERRFGPGQKESPYQVPSQTADYLSRMFNYPVNVYLVDTSEVGEIEVKPYQSFLQSFPPGIHLVTLRTITDDVLELFPSNESYMVLHRPGYSCAVGEKPVAKSPKFSSKTRFNGLNIQNITAVSLTGLKSLRPLTGLSDIHLNAMEVKTYKIRF.

Residues 1 to 14 (MRTRVLRCRPFSTR) lie on the Cytoplasmic side of the membrane. The helical; Signal-anchor for type II membrane protein transmembrane segment at 15-35 (ILLLLLFVLAFGVYCYFYNAS) threads the bilayer. Residues 36–1130 (PQNYNKPRIS…MEVKTYKIRF (1095 aa)) lie on the Lumenal side of the membrane. The N-linked (GlcNAc...) asparagine glycan is linked to N117. Zn(2+)-binding residues include H133 and D135. The N-linked (GlcNAc...) asparagine glycan is linked to N166. The Zn(2+) site is built by D247 and H527. D247 (nucleophile) is an active-site residue. N622, N683, N1056, and N1095 each carry an N-linked (GlcNAc...) asparagine glycan.

This sequence belongs to the glycosyl hydrolase 38 family. In terms of assembly, homodimer; disulfide-linked. Zn(2+) is required as a cofactor. Post-translationally, N-glycosylated.

It localises to the microsome membrane. The protein resides in the golgi apparatus membrane. It catalyses the reaction N(4)-{beta-D-GlcNAc-(1-&gt;2)-alpha-D-Man-(1-&gt;3)-[alpha-D-Man-(1-&gt;3)-[alpha-D-Man-(1-&gt;6)]-alpha-D-Man-(1-&gt;6)]-beta-D-Man-(1-&gt;4)-beta-D-GlcNAc-(1-&gt;4)-beta-D-GlcNAc}-L-asparaginyl-[protein] + 2 H2O = 2 alpha-D-mannopyranose + an N(4)-{beta-D-GlcNAc-(1-&gt;2)-alpha-D-Man-(1-&gt;3)-[alpha-D-Man-(1-&gt;6)]-beta-D-Man-(1-&gt;4)-beta-D-GlcNAc-(1-&gt;4)-beta-D-GlcNAc}-L-asparaginyl-[protein]. It functions in the pathway protein modification; protein glycosylation. With respect to regulation, inhibited by swainsonine. Functionally, catalyzes the first committed step in the biosynthesis of complex N-glycans. It controls conversion of high mannose to complex N-glycans; the final hydrolytic step in the N-glycan maturation pathway. This chain is Alpha-mannosidase 2, found in Spodoptera frugiperda (Fall armyworm).